A 327-amino-acid polypeptide reads, in one-letter code: GDP-mannose transporter (327 aa).

Residues 1–4 (MESS) lie on the Cytoplasmic side of the membrane. Residues 5–25 (LAAIANSGPISIFSYCVSSIL) form a helical membrane-spanning segment. The Lumenal portion of the chain corresponds to 26–36 (MTVTNKYVLSG). Residues 37–57 (FSFNMNFLLLAVQSIVCIVTI) traverse the membrane as a helical segment. Residues 58-78 (GSLKSFGVITYRQFNKEEARK) are Cytoplasmic-facing. A helical transmembrane segment spans residues 79–93 (WSPIAVLLVIMIYTS). Over 94–102 (SKALQYLSI) the chain is Lumenal. The chain crosses the membrane as a helical span at residues 103–125 (PVYTIFKNLTIILIAYGEVLWFG). The Cytoplasmic segment spans residues 126-131 (GKVTTM). A helical transmembrane segment spans residues 132 to 149 (ALSSFLLMVFSSVVAWYG). At 150-163 (DEAVSGSGNESFIA) the chain is on the lumenal side. The N-linked (GlcNAc...) asparagine glycan is linked to N158. The chain crosses the membrane as a helical span at residues 164–184 (LYLGYFWMATNCFASAAFVLI). The Cytoplasmic portion of the chain corresponds to 185–207 (MRKRIKLTNFKDFDTMYYNNLLS). Residues 208–228 (IPILLASSIIFEDWSAENLAV) form a helical membrane-spanning segment. The Lumenal segment spans residues 229 to 238 (NFPSDNRTAT). N234 carries N-linked (GlcNAc...) asparagine glycosylation. A helical transmembrane segment spans residues 239-259 (IAAMVLSGASSVGISYCSAWC). The Cytoplasmic portion of the chain corresponds to 260-266 (VRVTSST). A helical membrane pass occupies residues 267-289 (TYSMVGALNKLPIALSGLVFFPA). Over 290–292 (AVN) the chain is Lumenal. Residues 293–312 (FWSVASIFVGFAAGLVYAVA) traverse the membrane as a helical segment. Topologically, residues 313-327 (KQRQQKENVSLPSSK) are cytoplasmic.

It belongs to the TPT transporter family. SLC35D subfamily. Homooligomer.

The protein resides in the golgi apparatus membrane. The protein localises to the cytoplasmic vesicle membrane. It is found in the endoplasmic reticulum membrane. Involved in the import of GDP-mannose from the cytoplasm into the Golgi lumen. The protein is GDP-mannose transporter (VRG4) of Scheffersomyces stipitis (strain ATCC 58785 / CBS 6054 / NBRC 10063 / NRRL Y-11545) (Yeast).